The primary structure comprises 322 residues: Mycothiol acetyltransferase (322 aa).

N-acetyltransferase domains follow at residues 5 to 150 (SWLR…DPDD) and 160 to 322 (VTIR…PARG). 1D-myo-inositol 2-(L-cysteinylamino)-2-deoxy-alpha-D-glucopyranoside is bound at residue Glu-36. Acetyl-CoA is bound by residues 79 to 81 (LVV) and 87 to 92 (RRGVGT). 1D-myo-inositol 2-(L-cysteinylamino)-2-deoxy-alpha-D-glucopyranoside contacts are provided by Glu-187, Lys-226, and Glu-252. 256-258 (VGV) is an acetyl-CoA binding site. Tyr-290 contacts 1D-myo-inositol 2-(L-cysteinylamino)-2-deoxy-alpha-D-glucopyranoside. 295–300 (NARAVR) is a binding site for acetyl-CoA.

Belongs to the acetyltransferase family. MshD subfamily. In terms of assembly, monomer.

It carries out the reaction 1D-myo-inositol 2-(L-cysteinylamino)-2-deoxy-alpha-D-glucopyranoside + acetyl-CoA = mycothiol + CoA + H(+). Its function is as follows. Catalyzes the transfer of acetyl from acetyl-CoA to desacetylmycothiol (Cys-GlcN-Ins) to form mycothiol. This is Mycothiol acetyltransferase from Parafrankia sp. (strain EAN1pec).